A 120-amino-acid polypeptide reads, in one-letter code: ATP-dependent Clp protease adapter protein ClpS (120 aa).

The tract at residues methionine 1–glycine 25 is disordered.

The protein belongs to the ClpS family. Binds to the N-terminal domain of the chaperone ClpA.

Involved in the modulation of the specificity of the ClpAP-mediated ATP-dependent protein degradation. The sequence is that of ATP-dependent Clp protease adapter protein ClpS from Pseudomonas putida (strain W619).